Reading from the N-terminus, the 495-residue chain is Glutamyl-tRNA(Gln) amidotransferase subunit A (495 aa).

Active-site charge relay system residues include Lys78 and Ser158. Ser182 acts as the Acyl-ester intermediate in catalysis.

It belongs to the amidase family. GatA subfamily. In terms of assembly, heterotrimer of A, B and C subunits.

It catalyses the reaction L-glutamyl-tRNA(Gln) + L-glutamine + ATP + H2O = L-glutaminyl-tRNA(Gln) + L-glutamate + ADP + phosphate + H(+). In terms of biological role, allows the formation of correctly charged Gln-tRNA(Gln) through the transamidation of misacylated Glu-tRNA(Gln) in organisms which lack glutaminyl-tRNA synthetase. The reaction takes place in the presence of glutamine and ATP through an activated gamma-phospho-Glu-tRNA(Gln). In Roseobacter denitrificans (strain ATCC 33942 / OCh 114) (Erythrobacter sp. (strain OCh 114)), this protein is Glutamyl-tRNA(Gln) amidotransferase subunit A.